The following is a 361-amino-acid chain: DNA replication and repair protein RecF (361 aa).

ATP is bound at residue 30-37 (GQNAQGKT).

It belongs to the RecF family.

It localises to the cytoplasm. Its function is as follows. The RecF protein is involved in DNA metabolism; it is required for DNA replication and normal SOS inducibility. RecF binds preferentially to single-stranded, linear DNA. It also seems to bind ATP. This chain is DNA replication and repair protein RecF, found in Streptococcus gordonii (strain Challis / ATCC 35105 / BCRC 15272 / CH1 / DL1 / V288).